A 401-amino-acid chain; its full sequence is MKQRRRRNGCSSSNTISLLLLFFLVFFSRTSTSTSCRRRTVKHLSTTSTSSTPLESRITSKVIVISIVSGILTGLVSALVLAFLVRSIVKFMKQTPILKGPVVFSPKITPKSLHAALSNGIQLLGSDLNGKYYKMVLDNGLVVAVKRLGSLEGVGSPESSSSKSVKRRLQKELELLAGLRHRNLMSLRAYVRESDEFSLVYDYMPNGSLEDVMNKVRTKEVELGWEIRLRVAVGIVKGLQYLHFSCETQILHYNLKPTNVMLDSEFEPRLADCGLAKIMPSSHTAVSCYSAPESSQSNRYTDKSDIFSFGMILGVLLTGRDPTHPFCEESASGGSLGQWLKHLQQSGEAREALDKTILGEEVEEDEMLMALRITIICLSDFPADRPSSDELVHMLTQLHSF.

Residues 1-33 (MKQRRRRNGCSSSNTISLLLLFFLVFFSRTSTS) form the signal peptide. The Extracellular segment spans residues 34-62 (TSCRRRTVKHLSTTSTSSTPLESRITSKV). A helical transmembrane segment spans residues 63–83 (IVISIVSGILTGLVSALVLAF). Over 84–401 (LVRSIVKFMK…VHMLTQLHSF (318 aa)) the chain is Cytoplasmic. A Protein kinase domain is found at 118-401 (SNGIQLLGSD…VHMLTQLHSF (284 aa)). ATP contacts are provided by residues 124 to 132 (LGSDLNGKY) and Lys146.

It belongs to the protein kinase superfamily. Ser/Thr protein kinase family. As to quaternary structure, self-interacts. Parts of a tetrameric complex made of two CLV2/CRN heterodimers that can interact with CLV3 and CLE peptides. CLV2/CRN heterodimer interacts with CLV1 homodimers. Interacts with CLV1 and CLV2. CLV2/CRN heterodimer can interact with BAM3. In terms of tissue distribution, present in roots, stems, leaves, inflorescence, flowers and siliques. Mostly expressed in shoot tips and, to a lesser extent, in young organs and roots. Also expressed in the inner tissues of the proximal root meristem. Expressed in the vascular cylinder of root tips, mostly in phloem poles.

The protein localises to the cell membrane. It is found in the endoplasmic reticulum membrane. In terms of biological role, involved in the perception of CLV3 and CLV3-like (CLE) peptides, that act as extracellular signals regulating meristem maintenance. Modulates root, shoot and flower apical meristem maintenance and floral organ development regulation, probably via CLAVATA (CLV)-like pathways involving at least CLV3 and CLE19. In complex with CLV2, perceives secreted CLV3-like effector proteins from plant-parasitic cyst nematodes as ligand mimics of the plant CLE signaling pathway. This recognition is required for proper feeding structure (syncytium) development and ultimately successful nematode infection. CLE14 perception by CLV2/CRN complex triggers root meristem differentiation. Required for the sensing of the root CLE peptides (e.g. CLE8, CLE9/CLE10, CLE11, CLE13, CLE14, CLE16, CLE17, CLE18, CLE20, CLE21, CLE25, CLE26, CLE40, CLE41/CLE44 and CLE45), which also involves CLV2 and leads to root growth regulation, mostly in the phloem and protophloem. Promotes the accumulation of BAM3, especially at later stages of protophloem development. This chain is Inactive leucine-rich repeat receptor-like protein kinase CORYNE, found in Arabidopsis thaliana (Mouse-ear cress).